Here is a 177-residue protein sequence, read N- to C-terminus: Probable inosine/xanthosine triphosphatase (177 aa).

The protein belongs to the YjjX NTPase family. As to quaternary structure, homodimer. Requires Mg(2+) as cofactor. Mn(2+) serves as cofactor.

It carries out the reaction XTP + H2O = XDP + phosphate + H(+). The catalysed reaction is ITP + H2O = IDP + phosphate + H(+). In terms of biological role, phosphatase that hydrolyzes non-canonical purine nucleotides such as XTP and ITP to their respective diphosphate derivatives. Probably excludes non-canonical purines from DNA/RNA precursor pool, thus preventing their incorporation into DNA/RNA and avoiding chromosomal lesions. The protein is Probable inosine/xanthosine triphosphatase of Halalkalibacterium halodurans (strain ATCC BAA-125 / DSM 18197 / FERM 7344 / JCM 9153 / C-125) (Bacillus halodurans).